The primary structure comprises 60 residues: Metallothionein (60 aa).

The tract at residues Met-1–Cys-28 is beta. A divalent metal cation contacts are provided by Cys-4, Cys-6, Cys-12, Cys-14, Cys-18, Cys-20, Cys-23, Cys-25, Cys-28, Cys-32, Cys-33, Cys-35, Cys-36, Cys-40, Cys-43, Cys-47, Cys-49, Cys-54, Cys-58, and Cys-59. An alpha region spans residues Lys-29 to Gln-60.

This sequence belongs to the metallothionein superfamily. Type 1 family.

In terms of biological role, metallothioneins have a high content of cysteine residues that bind various heavy metals. The chain is Metallothionein (mt) from Perca fluviatilis (European perch).